The primary structure comprises 302 residues: Probable alpha-L-glutamate ligase (302 aa).

In terms of domain architecture, ATP-grasp spans 112 to 294; the sequence is LQLLLKAGIP…IAAEIIDYIE (183 aa). Residues Lys148, 185 to 186, Asp194, and 218 to 220 each bind ATP; these read DF and RAN. Positions 255, 267, and 269 each coordinate Mg(2+). Asp255, Glu267, and Asn269 together coordinate Mn(2+).

The protein belongs to the RimK family. It depends on Mg(2+) as a cofactor. The cofactor is Mn(2+).

This is Probable alpha-L-glutamate ligase from Haemophilus influenzae (strain ATCC 51907 / DSM 11121 / KW20 / Rd).